The chain runs to 917 residues: MEEQKSIKETLQQGASGDKTKKKLVIKKKAAPSDEKKESSPGAQGQTTATEAKQSSPASSDKKKDLNELIREEAKRQGLGSGPQAPSQASPIVSRPDRKPEPLPQPDREKAPMDRKPESILSGDTSSPNFRSGGGQGGGNQGYFRKEDRNPIVSRPTTPRPPRPEGQTGGGYQGNRGPGQGGGYQGNRGPGQGGPGGYQGNRGPGQGGPGGYQGNRGPGQGGPGGYQGNRGPGQGGPGGYQGNRGPGQGGPGGYQGNRGARPIGQGGPGSGRPPGDAPFGAPGGLPGAGGPGGAKKRVFDKEKGGREENENTKFFKQSFRKQKAQAAALAAVPKEISILENIQVGEIAKKLNLKPGEVISKLMKMGMMVTINNVIDAETASILADDYGCKVKIVSLYDETVIEEEKDAPEDYITRPPVVTIMGHVDHGKTKLLDTIRSSRVAEGESGGITQHIGAYQVETERGKIAFLDTPGHEAFTSMRARGASVTDIVVLVVAADDGVMPQTIEAINHAKEAEVPIIVAVNKIDLPAANPEKVRQELSNYGLQPEEWGGTTIFCDISAKSNIGIDKLLEMLIIQAELLDHKANPKRKAKGTIVEAKLDPGRGAVATVLIQNGTLRVGDAFVAGVHAGRVRAMYDDLGRSIKEAGPSFPALVTGLDGVPDAGAPFDVVIDDKEARTISHSRQEYERLGQSKNAATRVTLDNMSEIIKQGALKELKVIIKADVRGSTEAVKEALEKLSTADVRLNVIHAGTGAIVDSDIILASASNAIVIGFHTRANPKTVSLAEKEKVEIKYYSIIYDVVNEVKASMEGMLEPEKVENIIGKVEIRDVFKISKVGNIAGCMVKSGKVTKQAHVRVISSETGEITWEGKIKNLKRMKDDVADVLTGFECGILLDGFNDFSVGDEIEAYEIREIARKL.

Residues 1–312 (MEEQKSIKET…KGGREENENT (312 aa)) form a disordered region. A compositionally biased stretch (basic residues) spans 20 to 30 (TKKKLVIKKKA). Polar residues predominate over residues 41 to 59 (PGAQGQTTATEAKQSSPAS). 2 stretches are compositionally biased toward basic and acidic residues: residues 60–76 (SDKKKDLNELIREEAKR) and 95–118 (RPDRKPEPLPQPDREKAPMDRKPE). 3 stretches are compositionally biased toward gly residues: residues 132–141 (SGGGQGGGNQ), 167–256 (QTGG…GYQG), and 281–293 (APGGLPGAGGPGG). A compositionally biased stretch (basic and acidic residues) spans 297 to 312 (RVFDKEKGGREENENT). In terms of domain architecture, tr-type G spans 414–587 (TRPPVVTIMG…ELLDHKANPK (174 aa)). The tract at residues 423 to 430 (GHVDHGKT) is G1. 423–430 (GHVDHGKT) lines the GTP pocket. The interval 448–452 (GITQH) is G2. The tract at residues 469 to 472 (DTPG) is G3. GTP-binding positions include 469–473 (DTPGH) and 523–526 (NKID). The segment at 523 to 526 (NKID) is G4. The interval 559–561 (SAK) is G5.

The protein belongs to the TRAFAC class translation factor GTPase superfamily. Classic translation factor GTPase family. IF-2 subfamily.

It is found in the cytoplasm. Its function is as follows. One of the essential components for the initiation of protein synthesis. Protects formylmethionyl-tRNA from spontaneous hydrolysis and promotes its binding to the 30S ribosomal subunits. Also involved in the hydrolysis of GTP during the formation of the 70S ribosomal complex. The sequence is that of Translation initiation factor IF-2 from Leptospira biflexa serovar Patoc (strain Patoc 1 / ATCC 23582 / Paris).